The chain runs to 603 residues: NADH-ubiquinone oxidoreductase chain 5 (603 aa).

Transmembrane regions (helical) follow at residues tyrosine 4–isoleucine 24, serine 38–aspartate 58, methionine 87–tyrosine 107, leucine 122–isoleucine 142, tryptophan 144–alanine 160, alanine 171–leucine 191, threonine 211–leucine 233, threonine 241–isoleucine 261, leucine 272–alanine 292, isoleucine 301–asparagine 320, alanine 325–isoleucine 347, serine 370–tyrosine 390, asparagine 405–tyrosine 422, leucine 457–threonine 477, isoleucine 482–leucine 502, and glycine 582–isoleucine 602.

Belongs to the complex I subunit 5 family. Core subunit of respiratory chain NADH dehydrogenase (Complex I) which is composed of 45 different subunits.

It is found in the mitochondrion inner membrane. It carries out the reaction a ubiquinone + NADH + 5 H(+)(in) = a ubiquinol + NAD(+) + 4 H(+)(out). Functionally, core subunit of the mitochondrial membrane respiratory chain NADH dehydrogenase (Complex I) which catalyzes electron transfer from NADH through the respiratory chain, using ubiquinone as an electron acceptor. Essential for the catalytic activity and assembly of complex I. The protein is NADH-ubiquinone oxidoreductase chain 5 (MT-ND5) of Pan troglodytes (Chimpanzee).